The primary structure comprises 289 residues: MTNNDAAVEAPSSSRASSSKQQPKLEITEKVRVLCLHGYRQDGDAFKNKLGSFRKFTSKYAEFVFISAPHIAAPLESAAEPVPEQRSWWANKDDGTFKGTNKGGPAFGFQDSLRLVEEAWKTQGPFQGLLGFSQGACFVGLICGLAKKKLTSIRPEFAVLSSGFVSGSLVHMSAYEEPVSIPTLHIYGSSDEIIPKDMSALLASHFKNVEVLEHGGGHYFPATAQQKQTYINFFQDRLQEYLEHLELQQSSSVSFIESGAEDNDDDGDANDAEVAAATAAAGSDLDDSD.

Over residues Met1 to Ser19 the composition is skewed to low complexity. The segment at Met1–Lys24 is disordered. Active-site charge relay system residues include Ser133, Asp191, and His218. The tract at residues Val253 to Asp289 is disordered. A compositionally biased stretch (acidic residues) spans Gly259–Asp271. Over residues Ala272–Ser283 the composition is skewed to low complexity.

It belongs to the LovG family.

The polypeptide is Esterase GA18864 (Drosophila pseudoobscura pseudoobscura (Fruit fly)).